A 308-amino-acid chain; its full sequence is Ribonuclease Z (308 aa).

Residues His-60, His-62, Asp-64, His-65, His-140, Asp-209, and His-269 each contribute to the Zn(2+) site. Asp-64 serves as the catalytic Proton acceptor.

Belongs to the RNase Z family. Homodimer. It depends on Zn(2+) as a cofactor.

It catalyses the reaction Endonucleolytic cleavage of RNA, removing extra 3' nucleotides from tRNA precursor, generating 3' termini of tRNAs. A 3'-hydroxy group is left at the tRNA terminus and a 5'-phosphoryl group is left at the trailer molecule.. Its function is as follows. Zinc phosphodiesterase, which displays some tRNA 3'-processing endonuclease activity. Probably involved in tRNA maturation, by removing a 3'-trailer from precursor tRNA. In Methanococcus maripaludis (strain DSM 14266 / JCM 13030 / NBRC 101832 / S2 / LL), this protein is Ribonuclease Z.